The following is a 277-amino-acid chain: Glutamate racemase (277 aa).

Substrate-binding positions include 25-26 (DS) and 57-58 (YG). The active-site Proton donor/acceptor is the Cys-89. Substrate is bound at residue 90 to 91 (NT). The active-site Proton donor/acceptor is the Cys-204. A substrate-binding site is contributed by 205 to 206 (TH).

It belongs to the aspartate/glutamate racemases family.

It catalyses the reaction L-glutamate = D-glutamate. It participates in cell wall biogenesis; peptidoglycan biosynthesis. Functionally, provides the (R)-glutamate required for cell wall biosynthesis. This chain is Glutamate racemase, found in Brucella abortus (strain 2308).